The primary structure comprises 420 residues: MNIFNNKLQEIDKGIFEIIKHEKTRQNSVIELIASENFVSPAVLEAQGSVLTNKYAEGYSGKRFYNGCEEVDKAENLAIERAKKLFNCKYANVQPHSGSQANQAVYLALMQPGDTVLGMSLDSGGHLTHGSTANMSGKWFNAVSYSVDKETYLIDYDEVERLAILHKPKLLIAGFSAYPRNLDFAKFREIADKVGAYLMADIAHIAGLVAAGEHQSPIPHAHIVTSTTNKTLRGPRGGLILSNDEEIGKKINSALFPGLQGGPLMHIIAAKAVAFLESLQPEYKSYIKQVIINAKALAGSLQERGYDILTGGTDNHIVLVDLRKDGITGKIAANSLDRAGITCNKNAIPFDKTSPFITSGIRLGTPACTTRGFKEKDFVLVGHLIADILDGLKNSEDNSKAEQKVLSEVTKLIKLFPFYD.

Residues Leu121 and Gly125–Leu127 each bind (6S)-5,6,7,8-tetrahydrofolate. Lys230 bears the N6-(pyridoxal phosphate)lysine mark. (6S)-5,6,7,8-tetrahydrofolate contacts are provided by residues Glu246 and Ser354 to Phe356.

This sequence belongs to the SHMT family. Homodimer. Requires pyridoxal 5'-phosphate as cofactor.

The protein resides in the cytoplasm. The catalysed reaction is (6R)-5,10-methylene-5,6,7,8-tetrahydrofolate + glycine + H2O = (6S)-5,6,7,8-tetrahydrofolate + L-serine. Its pathway is one-carbon metabolism; tetrahydrofolate interconversion. In terms of biological role, catalyzes the reversible interconversion of serine and glycine with tetrahydrofolate (THF) serving as the one-carbon carrier. This reaction serves as the major source of one-carbon groups required for the biosynthesis of purines, thymidylate, methionine, and other important biomolecules. In Rickettsia bellii (strain RML369-C), this protein is Probable serine hydroxymethyltransferase.